Here is a 481-residue protein sequence, read N- to C-terminus: Cytochrome P450 monooxygenase dpfgJ (481 aa).

The helical transmembrane segment at 23-43 (LVFTQAAVIGSILFVFLLGLY) threads the bilayer. N-linked (GlcNAc...) asparagine glycosylation is present at N338. C427 serves as a coordination point for heme.

This sequence belongs to the cytochrome P450 family. Heme serves as cofactor.

The protein resides in the membrane. It participates in secondary metabolite biosynthesis; terpenoid biosynthesis. In terms of biological role, cytochrome P450 monooxygenase; part of the gene cluster that mediates the biosynthesis of diterpenoid pyrones. The first step of the pathway is the synthesis of the alpha-pyrone moiety by the polyketide synthase dpfgA via condensation of one acetyl-CoA starter unit with 3 malonyl-CoA units and 2 methylations. The alpha-pyrone is then combined with geranylgeranyl pyrophosphate (GGPP) formed by the GGPP synthase dpfgD through the action of the prenyltransferase dpfgC to yield a linear alpha-pyrone diterpenoid. Subsequent steps in the diterpenoid pyrone biosynthetic pathway involve the decalin core formation, which is initiated by the epoxidation of the C10-C11 olefin by the FAD-dependent oxidoreductase dpfgE, and is followed by a cyclization cascade catalyzed by the terpene cyclase dpfgB. The short chain dehydrogenase/reductase dpfgG then oxidizes the 8S hydroxy group to a ketone and the short chain dehydrogenase/reductase dpfgH reduces the ketone to the 8R hydroxy group to yield higginsianin B. Higginsianin B is further methylated by the methyltransferase dpfgI to produce the intermediate named FDDP B. The cytochrome P450 monooxygenase dfgpJ then catalyzes a three-step oxidation at C-27 to generate a carboxylic acid as well as C-26 hydroxylation. Finally, methyltransferase dpfgK methylates the carboxylic acid generated by dpfgJ, yielding the final diterpenoid pyrones from the pathway which were named FDDP D and FDDP E. This is Cytochrome P450 monooxygenase dpfgJ from Gibberella zeae (strain ATCC MYA-4620 / CBS 123657 / FGSC 9075 / NRRL 31084 / PH-1) (Wheat head blight fungus).